The following is a 438-amino-acid chain: Gamma-glutamyl phosphate reductase (438 aa).

This sequence belongs to the gamma-glutamyl phosphate reductase family.

Its subcellular location is the cytoplasm. The catalysed reaction is L-glutamate 5-semialdehyde + phosphate + NADP(+) = L-glutamyl 5-phosphate + NADPH + H(+). It functions in the pathway amino-acid biosynthesis; L-proline biosynthesis; L-glutamate 5-semialdehyde from L-glutamate: step 2/2. In terms of biological role, catalyzes the NADPH-dependent reduction of L-glutamate 5-phosphate into L-glutamate 5-semialdehyde and phosphate. The product spontaneously undergoes cyclization to form 1-pyrroline-5-carboxylate. The protein is Gamma-glutamyl phosphate reductase of Natronomonas pharaonis (strain ATCC 35678 / DSM 2160 / CIP 103997 / JCM 8858 / NBRC 14720 / NCIMB 2260 / Gabara) (Halobacterium pharaonis).